Here is a 156-residue protein sequence, read N- to C-terminus: UPF0178 protein Jann_2168 (156 aa).

It belongs to the UPF0178 family.

This chain is UPF0178 protein Jann_2168, found in Jannaschia sp. (strain CCS1).